The following is a 432-amino-acid chain: Homogentisate 1,2-dioxygenase (432 aa).

His-286 acts as the Proton acceptor in catalysis. Fe cation contacts are provided by His-329 and Glu-335. 2 residues coordinate homogentisate: Tyr-344 and His-365. Residue His-365 coordinates Fe cation.

The protein belongs to the homogentisate dioxygenase family. As to quaternary structure, hexamer; dimer of trimers. It depends on Fe cation as a cofactor.

It carries out the reaction homogentisate + O2 = 4-maleylacetoacetate + H(+). It functions in the pathway amino-acid degradation; L-phenylalanine degradation; acetoacetate and fumarate from L-phenylalanine: step 4/6. In terms of biological role, involved in the catabolism of homogentisate (2,5-dihydroxyphenylacetate or 2,5-OH-PhAc), a central intermediate in the degradation of phenylalanine and tyrosine. Catalyzes the oxidative ring cleavage of the aromatic ring of homogentisate to yield maleylacetoacetate. In Bordetella bronchiseptica (strain ATCC BAA-588 / NCTC 13252 / RB50) (Alcaligenes bronchisepticus), this protein is Homogentisate 1,2-dioxygenase.